The sequence spans 225 residues: THAP domain-containing protein 1 (225 aa).

A THAP-type zinc finger spans residues 5–57 (CSAYGCKNRYDKDKPISFHKFPLKRPLLCRKWEAAVRRADFKPTKYSSICSDH). Residues 139–194 (VEDTVHQRRRIQQLEEQVDKLRKKLKIANQKCRRQERSLEKLEREVSEYREAKGSG) are a coiled coil.

This sequence belongs to the THAP1 family.

It localises to the nucleus. Its subcellular location is the nucleoplasm. DNA-binding transcription regulator that regulates endothelial cell proliferation and G1/S cell-cycle progression. Specifically binds the 5'-[AT]NTNN[GT]GGCA[AGT]-3' core DNA sequence and acts by modulating expression of pRB-E2F cell-cycle target genes. The polypeptide is THAP domain-containing protein 1 (thap1) (Xenopus tropicalis (Western clawed frog)).